The sequence spans 274 residues: Sulfur carrier protein FdhD (274 aa).

The active-site Cysteine persulfide intermediate is Cys121. 258–263 (FSKPGR) is a Mo-bis(molybdopterin guanine dinucleotide) binding site.

Belongs to the FdhD family.

It localises to the cytoplasm. Functionally, required for formate dehydrogenase (FDH) activity. Acts as a sulfur carrier protein that transfers sulfur from IscS to the molybdenum cofactor prior to its insertion into FDH. The protein is Sulfur carrier protein FdhD of Yersinia pseudotuberculosis serotype O:3 (strain YPIII).